The sequence spans 106 residues: Circadian clock oscillator protein KaiB (106 aa).

This sequence belongs to the KaiB family. As to quaternary structure, the KaiABC complex composition changes during the circadian cycle to control KaiC phosphorylation. Complexes KaiC(6), KaiA(2-4):KaiC(6), KaiB(6):KaiC(6) and KaiC(6):KaiB(6):KaiA(12) are among the most important forms, many form cooperatively. Undergoes a major conformational rearrangment; in the free state forms homotetramers as a dimer of dimers. When bound to the CI domain of KaiC switches to a monomeric thioredoxin-fold (KaiB(fs)). KaiB(fs) binds CikA, leading it to dephosphorylate phospho-RpaA.

In terms of biological role, key component of the KaiABC oscillator complex, which constitutes the main circadian regulator in cyanobacteria. Complex composition changes during the circadian cycle to control KaiC phosphorylation. KaiA stimulates KaiC autophosphorylation, while KaiB sequesters KaiA, leading to KaiC autodephosphorylation. Phospho-Ser-431 KaiC accumulation triggers binding of KaiB to form the KaiB(6):KaiC(6) complex, leading to changes in output regulators CikA and SasA. KaiB switches to a thioredoxin-like fold (KaiB(fs)) when bound to KaiC. KaiB(6):KaiC(6) formation exposes a site for KaiA binding that sequesters KaiA from KaiC, making the KaiC(6):KaiB(6):KaiA(12) complex that results in KaiC autodephosphorylation. Its function is as follows. A metamorphic protein which reversibly switches between an inactive tetrameric fold and a rare, thioredoxin-like monomeric fold (KaiB(fs)). KaiB(fs) binds phospho-KaiC, KaiA and CikA. KaiA and CikA compete for binding to KaiB(fs), and KaiB(fs) and SasA compete for binding to KaiC, thus the clock oscillator and output signal pathway are tightly coupled. This Gloeothece citriformis (strain PCC 7424) (Cyanothece sp. (strain PCC 7424)) protein is Circadian clock oscillator protein KaiB.